The sequence spans 243 residues: Homeobox protein goosecoid isoform A (243 aa).

A DNA-binding region (homeobox) is located at residues 148 to 207 (KRRHRTIFTDEQLEALENLFQETKYPDVGTREQLARRVHLREEKVEVWFKNRRAKWRRQK). Positions 201–243 (AKWRRQKRSSSEESENAQKWNKSSKNSAEKADEQVKSDLDSDS) are disordered. The span at 217–226 (AQKWNKSSKN) shows a compositional bias: polar residues. The span at 227 to 243 (SAEKADEQVKSDLDSDS) shows a compositional bias: basic and acidic residues.

It belongs to the paired homeobox family. Bicoid subfamily. As to expression, at the start of gastrulation, it is found in a patch of cells encompassing 60 degrees of arc on the dorsal marginal zone.

The protein localises to the nucleus. Plays a central role in executing Spemann's organizer phenomenon (the dorsal blastopore lip of the early Xenopus laevis gastrula can organize a complete secondary body axis when transplanted to another embryo). This chain is Homeobox protein goosecoid isoform A (gsc-a), found in Xenopus laevis (African clawed frog).